Reading from the N-terminus, the 163-residue chain is Protein-export protein SecB (163 aa).

This sequence belongs to the SecB family. As to quaternary structure, homotetramer, a dimer of dimers. One homotetramer interacts with 1 SecA dimer.

The protein resides in the cytoplasm. In terms of biological role, one of the proteins required for the normal export of preproteins out of the cell cytoplasm. It is a molecular chaperone that binds to a subset of precursor proteins, maintaining them in a translocation-competent state. It also specifically binds to its receptor SecA. The polypeptide is Protein-export protein SecB (Methylibium petroleiphilum (strain ATCC BAA-1232 / LMG 22953 / PM1)).